We begin with the raw amino-acid sequence, 125 residues long: Ribosome-binding factor A (125 aa).

This sequence belongs to the RbfA family. Monomer. Binds 30S ribosomal subunits, but not 50S ribosomal subunits or 70S ribosomes.

It is found in the cytoplasm. Functionally, one of several proteins that assist in the late maturation steps of the functional core of the 30S ribosomal subunit. Associates with free 30S ribosomal subunits (but not with 30S subunits that are part of 70S ribosomes or polysomes). Required for efficient processing of 16S rRNA. May interact with the 5'-terminal helix region of 16S rRNA. This chain is Ribosome-binding factor A, found in Fervidobacterium nodosum (strain ATCC 35602 / DSM 5306 / Rt17-B1).